Reading from the N-terminus, the 537-residue chain is Small conductance calcium-activated potassium channel protein 1 (537 aa).

The span at 1 to 10 shows a compositional bias: polar residues; that stretch reads MSSHSHNGSV. The disordered stretch occupies residues 1–90; the sequence is MSSHSHNGSV…GKPPTVSHRL (90 aa). The segment covering 65–76 has biased composition (acidic residues); it reads QEEEEEEEEEED. The chain crosses the membrane as a helical span at residues 108–128; it reads LIFGMFGIVVMVTETELSWGV. The helical transmembrane segment at 137-157 threads the bilayer; it reads FALKCLISLSTVILLGLVILY. A helical membrane pass occupies residues 176-196; the sequence is IAMTWERVSLISLELVVCAIH. Residues 225–245 traverse the membrane as a helical segment; it reads VLLSIPMFLRLYLLARVMLLH. A helical transmembrane segment spans residues 274 to 294; sequence LMTICPGTVLLVFSVSSWIVA. An intramembrane region (pore-forming) is located at residues 314 to 334; sequence FLGAMWLISITFLSIGYGDMV. Residues 343 to 363 are segment S6; the sequence is VCLLTGIMGAGCTALVVAVVA. The segment at 381-460 is calmodulin-binding; that stretch reads DTQLTKRVKN…LAELAKAQSI (80 aa).

This sequence belongs to the potassium channel KCNN family. KCa2.1/KCNN1 subfamily. In terms of assembly, homodimer. Heteromultimer with KCNN2 and KCNN3. The complex is composed of 4 channel subunits each of which binds to a calmodulin subunit which regulates the channel activity through calcium-binding. Interacts with calmodulin. Highest expression in brain and liver with lower levels in heart, testis, kidney and colon. In colon, detected in smooth muscle cells. Expressed in atrial and ventricular myocytes with higher levels in atrial myocytes.

The protein localises to the membrane. The protein resides in the cytoplasm. Its subcellular location is the myofibril. It localises to the sarcomere. It is found in the z line. The enzyme catalyses K(+)(in) = K(+)(out). Inhibited by bee venom neurotoxin apamin. Inhibited by d-tubocurarine and tetraethylammonium (TEA). Functionally, small conductance calcium-activated potassium channel that mediates the voltage-independent transmembrane transfer of potassium across the cell membrane through a constitutive interaction with calmodulin which binds the intracellular calcium allowing its opening. The current is characterized by a voltage-independent activation, an intracellular calcium concentration increase-dependent activation and a single-channel conductance of about 3 picosiemens. Also presents an inwardly rectifying current, thus reducing its already small outward conductance of potassium ions, which is particularly the case when the membrane potential displays positive values, above + 20 mV. Activation is followed by membrane hyperpolarization. Thought to regulate neuronal excitability by contributing to the slow component of synaptic afterhyperpolarization. The protein is Small conductance calcium-activated potassium channel protein 1 of Mus musculus (Mouse).